The chain runs to 128 residues: Small ribosomal subunit protein eS8 (128 aa).

Belongs to the eukaryotic ribosomal protein eS8 family. As to quaternary structure, part of the 30S ribosomal subunit.

This chain is Small ribosomal subunit protein eS8, found in Methanococcus maripaludis (strain C6 / ATCC BAA-1332).